Consider the following 891-residue polypeptide: Protein SEY1 homolog (891 aa).

Residues 1-754 (MNLHLVDSDG…LRAAEAGNQR (754 aa)) lie on the Cytoplasmic side of the membrane. In terms of domain architecture, GB1/RHD3-type G spans 52–318 (GLNYHVVGVF…RCSDYLFSYH (267 aa)). 62-69 (GGQSSGKS) is a GTP binding site. The chain crosses the membrane as a helical span at residues 755–775 (LPAWVIPALFILGWNELLYVL). The Lumenal portion of the chain corresponds to 776 to 778 (TSP). Residues 779–799 (ALLVLVVVICAVFFRQFFVSQ) form a helical membrane-spanning segment. The Cytoplasmic portion of the chain corresponds to 800 to 891 (WHAFEETGPA…MRHRTTHKLD (92 aa)). Polar residues predominate over residues 863–880 (STHADPAPSNTTVPTAQA). The interval 863 to 891 (STHADPAPSNTTVPTAQATMRHRTTHKLD) is disordered. Positions 882-891 (MRHRTTHKLD) are enriched in basic residues.

It belongs to the TRAFAC class dynamin-like GTPase superfamily. GB1/RHD3 GTPase family. RHD3 subfamily.

It is found in the endoplasmic reticulum membrane. In terms of biological role, probable GTP-binding protein that may be involved in cell development. This is Protein SEY1 homolog from Leishmania braziliensis.